Reading from the N-terminus, the 1358-residue chain is DNA-directed RNA polymerase subunit beta (1358 aa).

The segment covering 1033 to 1051 (QGLEDRKKEHEARFDDKKG) has biased composition (basic and acidic residues). The tract at residues 1033 to 1053 (QGLEDRKKEHEARFDDKKGKL) is disordered.

This sequence belongs to the RNA polymerase beta chain family. In terms of assembly, the RNAP catalytic core consists of 2 alpha, 1 beta, 1 beta' and 1 omega subunit. When a sigma factor is associated with the core the holoenzyme is formed, which can initiate transcription.

It catalyses the reaction RNA(n) + a ribonucleoside 5'-triphosphate = RNA(n+1) + diphosphate. DNA-dependent RNA polymerase catalyzes the transcription of DNA into RNA using the four ribonucleoside triphosphates as substrates. The polypeptide is DNA-directed RNA polymerase subunit beta (Marinobacter nauticus (strain ATCC 700491 / DSM 11845 / VT8) (Marinobacter aquaeolei)).